A 217-amino-acid polypeptide reads, in one-letter code: Adenylate kinase (217 aa).

10–15 (GAGKGT) serves as a coordination point for ATP. The NMP stretch occupies residues 30–59 (STGDMLREAVAKGTELGKKAKEYMDKGELV). AMP contacts are provided by residues Thr31, Arg36, 57-59 (ELV), 85-88 (GFPR), and Gln92. Positions 126-163 (YRRTCRNCGAVYHLIYAPPKEDNKCDKCGGELYQRDDD) are LID. Arg127 is an ATP binding site. Zn(2+) contacts are provided by Cys130 and Cys133. 136-137 (VY) is an ATP binding site. Zn(2+) contacts are provided by Cys150 and Cys153. AMP contacts are provided by Arg160 and Arg171. Lys199 provides a ligand contact to ATP.

Belongs to the adenylate kinase family. As to quaternary structure, monomer.

It localises to the cytoplasm. It carries out the reaction AMP + ATP = 2 ADP. It participates in purine metabolism; AMP biosynthesis via salvage pathway; AMP from ADP: step 1/1. Its function is as follows. Catalyzes the reversible transfer of the terminal phosphate group between ATP and AMP. Plays an important role in cellular energy homeostasis and in adenine nucleotide metabolism. In Archaeoglobus fulgidus (strain ATCC 49558 / DSM 4304 / JCM 9628 / NBRC 100126 / VC-16), this protein is Adenylate kinase.